The chain runs to 385 residues: Centrosomal protein of 44 kDa (385 aa).

A binds with microtubules and centrioles region spans residues 11 to 191 (RKLEQRLRTL…TKCYKSALLE (181 aa)). The segment covering 194–204 (EEEEPTSDCEE) has biased composition (acidic residues). The segment at 194-224 (EEEEPTSDCEEDSHLQREMGSPFETAEETPN) is disordered. 2 coiled-coil regions span residues 224-263 (NSEQ…KGKI) and 353-379 (TEES…ELLK).

Binds to centriolar microtubules.

Its subcellular location is the cytoplasm. The protein resides in the cytoskeleton. It is found in the microtubule organizing center. It localises to the centrosome. The protein localises to the centriole. Its subcellular location is the spindle pole. The protein resides in the midbody. Its function is as follows. Centriole-enriched microtubule-binding protein involved in centriole biogenesis. In collaboration with CEP295 and POC1B, is required for the centriole-to-centrosome conversion by ensuring the formation of bona fide centriole wall. Functions as a linker component that maintains centrosome cohesion. Associates with CROCC and regulates its stability and localization to the centrosome. This chain is Centrosomal protein of 44 kDa (cep44), found in Xenopus tropicalis (Western clawed frog).